Consider the following 350-residue polypeptide: Ion-translocating oxidoreductase complex subunit D (350 aa).

A run of 3 helical transmembrane segments spans residues 36-56, 89-109, and 124-144; these read CYFFGWGTLIQIALAIAIAVA, IPALAPWWIAAIGVIFAILVV, and AMAAYVMLLISFPMQMTTWVA. An FMN phosphoryl threonine modification is found at Thr185. The next 5 membrane-spanning stretches (helical) occupy residues 212–232, 239–259, 265–285, 298–318, and 319–339; these read GFGIGWALINLAYLAGGLVML, WQISTAILASLFVCASIGYLL, MGPLLHLFSGATMLAAFFIAT, LIFGSLIGLLVYLIRSFCGYP, and DAFAFAVLLANLCAPFIDYYV.

This sequence belongs to the NqrB/RnfD family. As to quaternary structure, the complex is composed of six subunits: RnfA, RnfB, RnfC, RnfD, RnfE and RnfG. It depends on FMN as a cofactor.

It localises to the cell inner membrane. In terms of biological role, part of a membrane-bound complex that couples electron transfer with translocation of ions across the membrane. The protein is Ion-translocating oxidoreductase complex subunit D of Shewanella loihica (strain ATCC BAA-1088 / PV-4).